The sequence spans 409 residues: Probable peptidoglycan glycosyltransferase FtsW (409 aa).

9 consecutive transmembrane segments (helical) span residues Leu42–Leu62, Pro72–Ala92, Leu108–Gly128, Val135–Ala155, Leu178–Leu198, Leu213–Val233, Phe303–Ile323, Tyr337–Ala357, and Leu368–Leu388.

This sequence belongs to the SEDS family. FtsW subfamily.

It localises to the cell inner membrane. The catalysed reaction is [GlcNAc-(1-&gt;4)-Mur2Ac(oyl-L-Ala-gamma-D-Glu-L-Lys-D-Ala-D-Ala)](n)-di-trans,octa-cis-undecaprenyl diphosphate + beta-D-GlcNAc-(1-&gt;4)-Mur2Ac(oyl-L-Ala-gamma-D-Glu-L-Lys-D-Ala-D-Ala)-di-trans,octa-cis-undecaprenyl diphosphate = [GlcNAc-(1-&gt;4)-Mur2Ac(oyl-L-Ala-gamma-D-Glu-L-Lys-D-Ala-D-Ala)](n+1)-di-trans,octa-cis-undecaprenyl diphosphate + di-trans,octa-cis-undecaprenyl diphosphate + H(+). It functions in the pathway cell wall biogenesis; peptidoglycan biosynthesis. Peptidoglycan polymerase that is essential for cell division. This chain is Probable peptidoglycan glycosyltransferase FtsW, found in Idiomarina loihiensis (strain ATCC BAA-735 / DSM 15497 / L2-TR).